The primary structure comprises 262 residues: Small ribosomal subunit protein uS2 (262 aa).

Positions 224–246 (GNQGEDQDDAQEQQVAADKKADS) are disordered.

Belongs to the universal ribosomal protein uS2 family.

In Lacticaseibacillus casei (strain BL23) (Lactobacillus casei), this protein is Small ribosomal subunit protein uS2.